Reading from the N-terminus, the 43-residue chain is Potassium channel toxin gamma-KTx 4.11 (43 aa).

Cystine bridges form between cysteine 5-cysteine 23, cysteine 11-cysteine 34, cysteine 20-cysteine 39, and cysteine 24-cysteine 41.

Belongs to the ergtoxin family. Gamma-KTx 4 subfamily. As to expression, expressed by the venom gland.

The protein resides in the secreted. Reversibly blocks Kv11/ERG potassium channels. The chain is Potassium channel toxin gamma-KTx 4.11 from Centruroides noxius (Mexican scorpion).